The chain runs to 406 residues: Acetylornithine aminotransferase (406 aa).

Residues 113-114 (GT) and Phe145 each bind pyridoxal 5'-phosphate. Residue Arg148 participates in N(2)-acetyl-L-ornithine binding. 233–236 (DEIQ) is a pyridoxal 5'-phosphate binding site. Lys262 is modified (N6-(pyridoxal phosphate)lysine). Position 290 (Ser290) interacts with N(2)-acetyl-L-ornithine. Position 291 (Thr291) interacts with pyridoxal 5'-phosphate.

The protein belongs to the class-III pyridoxal-phosphate-dependent aminotransferase family. ArgD subfamily. In terms of assembly, homodimer. Requires pyridoxal 5'-phosphate as cofactor.

It localises to the cytoplasm. The enzyme catalyses N(2)-acetyl-L-ornithine + 2-oxoglutarate = N-acetyl-L-glutamate 5-semialdehyde + L-glutamate. It participates in amino-acid biosynthesis; L-arginine biosynthesis; N(2)-acetyl-L-ornithine from L-glutamate: step 4/4. The sequence is that of Acetylornithine aminotransferase from Leptospira interrogans serogroup Icterohaemorrhagiae serovar Lai (strain 56601).